The primary structure comprises 198 residues: Holliday junction branch migration complex subunit RuvA (198 aa).

Residues 1 to 63 (MYDYIKGQLT…EDAHLLFGFH (63 aa)) form a domain I region. The tract at residues 64-142 (TEDEKDVFLK…EAPQETGHTK (79 aa)) is domain II. The interval 143 to 147 (ARSNK) is flexible linker. Residues 148–198 (AGNTQLDEAIEALLALGYKAKELKKIRAFFEGTSETAEQYIKSALKLLMKG) form a domain III region.

Belongs to the RuvA family. As to quaternary structure, homotetramer. Forms an RuvA(8)-RuvB(12)-Holliday junction (HJ) complex. HJ DNA is sandwiched between 2 RuvA tetramers; dsDNA enters through RuvA and exits via RuvB. An RuvB hexamer assembles on each DNA strand where it exits the tetramer. Each RuvB hexamer is contacted by two RuvA subunits (via domain III) on 2 adjacent RuvB subunits; this complex drives branch migration. In the full resolvosome a probable DNA-RuvA(4)-RuvB(12)-RuvC(2) complex forms which resolves the HJ.

It localises to the cytoplasm. Its function is as follows. The RuvA-RuvB-RuvC complex processes Holliday junction (HJ) DNA during genetic recombination and DNA repair, while the RuvA-RuvB complex plays an important role in the rescue of blocked DNA replication forks via replication fork reversal (RFR). RuvA specifically binds to HJ cruciform DNA, conferring on it an open structure. The RuvB hexamer acts as an ATP-dependent pump, pulling dsDNA into and through the RuvAB complex. HJ branch migration allows RuvC to scan DNA until it finds its consensus sequence, where it cleaves and resolves the cruciform DNA. This Streptococcus pyogenes serotype M1 protein is Holliday junction branch migration complex subunit RuvA.